A 607-amino-acid polypeptide reads, in one-letter code: uncharacterized protein (607 aa).

Disordered regions lie at residues 28–114 and 142–188; these read GAER…KLRR and DQER…NNSS. The span at 35–50 shows a compositional bias: polar residues; the sequence is SSHGSINSRSASPNKA. Composition is skewed to basic and acidic residues over residues 90–102 and 161–174; these read VNGE…DHDT and KENK…KDLS. Positions 177-188 are enriched in low complexity; the sequence is SSSSMKKANNSS. 2 PHD-type zinc fingers span residues 263-312 and 406-459; these read NDYC…CKHH and PILC…HSDH.

This is an uncharacterized protein from Schizosaccharomyces pombe (strain 972 / ATCC 24843) (Fission yeast).